The following is a 358-amino-acid chain: Heme A synthase 1 (358 aa).

The next 5 membrane-spanning stretches (helical) occupy residues 11-31 (LVGT…VGGG), 98-117 (WGRL…RLRG), 123-143 (LTAW…MGWY), 159-179 (LYLG…LWTA), and 199-219 (LLSV…LVAA). Residue His262 participates in heme binding. Helical transmembrane passes span 264–284 (VAAT…LRAP), 292–312 (LFLL…STLV), and 315–335 (MAEL…ACIA). Heme is bound at residue His322.

It belongs to the COX15/CtaA family. Type 2 subfamily. Interacts with CtaB. Requires heme b as cofactor.

It localises to the cell membrane. The catalysed reaction is Fe(II)-heme o + 2 A + H2O = Fe(II)-heme a + 2 AH2. The protein operates within porphyrin-containing compound metabolism; heme A biosynthesis; heme A from heme O: step 1/1. In terms of biological role, catalyzes the conversion of heme O to heme A by two successive hydroxylations of the methyl group at C8. The first hydroxylation forms heme I, the second hydroxylation results in an unstable dihydroxymethyl group, which spontaneously dehydrates, resulting in the formyl group of heme A. This is Heme A synthase 1 from Acidiphilium cryptum (strain JF-5).